Consider the following 245-residue polypeptide: Octopine transport system permease protein OccM (245 aa).

The next 5 helical transmembrane spans lie at 12–32 (FVAL…SVAL), 57–77 (FYIF…IYYG), 96–116 (AYWC…AEIM), 163–183 (ILMV…ITGI), and 204–224 (IYLI…WALW). The region spanning 19 to 216 (IPLALQLAVF…ILNFIVARLF (198 aa)) is the ABC transmembrane type-1 domain.

Belongs to the binding-protein-dependent transport system permease family. HisMQ subfamily.

Its subcellular location is the cell inner membrane. Functionally, component of the octopine active transport system probably consisting of four subunits: Q, M, P and T. The sequence is that of Octopine transport system permease protein OccM (occM) from Rhizobium radiobacter (Agrobacterium tumefaciens).